The chain runs to 239 residues: Large ribosomal subunit protein uL1 (239 aa).

It belongs to the universal ribosomal protein uL1 family. As to quaternary structure, part of the 50S ribosomal subunit.

Binds directly to 23S rRNA. The L1 stalk is quite mobile in the ribosome, and is involved in E site tRNA release. Its function is as follows. Protein L1 is also a translational repressor protein, it controls the translation of the L11 operon by binding to its mRNA. The polypeptide is Large ribosomal subunit protein uL1 (Rickettsia rickettsii (strain Iowa)).